A 353-amino-acid polypeptide reads, in one-letter code: Beta-agarase B (353 aa).

Positions 1 to 17 are cleaved as a signal peptide; that stretch reads MYLIYLRLVFCCALLLG. Residue Cys-18 is the site of N-palmitoyl cysteine attachment. Cys-18 carries S-diacylglycerol cysteine lipidation. The disordered stretch occupies residues 30–58; the sequence is LPVEQEQEQETEQEGEPEESSEQDLVEEV. Over residues 32–58 the composition is skewed to acidic residues; sequence VEQEQEQETEQEGEPEESSEQDLVEEV. A GH16 domain is found at 58–353; the sequence is VDWKDIPVPA…WIRIYKPVEK (296 aa). Substrate-binding positions include 105–107 and Asp-181; that span reads YHN. The active-site Nucleophile is Glu-184. Catalysis depends on Glu-189, which acts as the Proton donor. The substrate site is built by His-215, Arg-219, Asp-224, Gln-226, and Glu-308.

The protein belongs to the glycosyl hydrolase 16 family. In terms of assembly, homodimer.

Its subcellular location is the cell outer membrane. The catalysed reaction is Hydrolysis of (1-&gt;4)-beta-D-galactosidic linkages in agarose, giving the tetramer as the predominant product.. In terms of biological role, cleaves the beta-1,4-linkages between beta-D-galactose and alpha-L-3,6-anhydro-galactose residues in agarose. Cleaves agarose in a random manner with retention of the anomeric-bond configuration, producing beta-anomers that give rise progressively to alpha-anomers when mutarotation takes place. Also tolerant to hybrid substrates containing C6-sulfate groups at the -4, +1, and +3 positions. The chain is Beta-agarase B (agaB) from Zobellia galactanivorans (strain DSM 12802 / CCUG 47099 / CIP 106680 / NCIMB 13871 / Dsij).